Reading from the N-terminus, the 240-residue chain is Aquaporin SIP1-1 (240 aa).

The next 2 membrane-spanning stretches (helical) occupy residues 13 to 33 (LMTF…AAII) and 44 to 64 (APLV…TVIF). Positions 70-72 (NPT) match the NPA 1 motif. 3 helical membrane passes run 89–109 (SLAI…LAIM), 132–152 (GAIA…LIIL), and 163–183 (FLLA…TGPA). Residues 185 to 187 (NPA) carry the NPA 2 motif. The helical transmembrane segment at 203–223 (DHIYVYWISSFVGALSAALLF) threads the bilayer.

The protein belongs to the MIP/aquaporin (TC 1.A.8) family. SIP (TC 1.A.8.10) subfamily. As to expression, expressed in roots and above ground. Expressed in elongating regions of the root tips, trichome cells of the rosette leaves, vascular tissues of the flower petals, stigma, stamens (anthers and filaments), pollen and the top and bottom (receptacle) of siliques.

It is found in the endoplasmic reticulum membrane. Functionally, water channel required to facilitate the transport of water across cell membrane. The chain is Aquaporin SIP1-1 (SIP1-1) from Arabidopsis thaliana (Mouse-ear cress).